Consider the following 315-residue polypeptide: Protein-export membrane protein SecF (315 aa).

The next 6 helical transmembrane spans lie at 35-55 (MVLYPLVVFLVAALILAVHFP), 152-172 (QGIKAVIYAFIGMAIVVFLFF), 181-201 (IIFSAFSDMVIALATMGILGI), 205-225 (TATIAALLMLIGYTVDSNILL), 242-264 (LSAVSTGFTMSTTTLGALFILWL), and 282-302 (LLADFMNTWIFNAGVLRWYIA).

Belongs to the SecD/SecF family. SecF subfamily. As to quaternary structure, part of the protein translocation apparatus. Forms a complex with SecD.

It localises to the cell membrane. In terms of biological role, involved in protein export. The polypeptide is Protein-export membrane protein SecF (Thermococcus gammatolerans (strain DSM 15229 / JCM 11827 / EJ3)).